A 148-amino-acid polypeptide reads, in one-letter code: Endoribonuclease YbeY (148 aa).

Residues His-102, His-106, and His-112 each coordinate Zn(2+).

This sequence belongs to the endoribonuclease YbeY family. Zn(2+) serves as cofactor.

Its subcellular location is the cytoplasm. Single strand-specific metallo-endoribonuclease involved in late-stage 70S ribosome quality control and in maturation of the 3' terminus of the 16S rRNA. This Phytoplasma mali (strain AT) protein is Endoribonuclease YbeY.